Consider the following 510-residue polypeptide: Glycerol kinase (510 aa).

Thr13 provides a ligand contact to ADP. Positions 13 and 14 each coordinate ATP. Residue Thr13 participates in sn-glycerol 3-phosphate binding. Position 17 (Arg17) interacts with ADP. 4 residues coordinate sn-glycerol 3-phosphate: Arg83, Glu84, Tyr135, and Asp255. Residues Arg83, Glu84, Tyr135, Asp255, and Gln256 each contribute to the glycerol site. The ADP site is built by Thr277, Gly321, Gly421, and Asn425. Residues Thr277, Gly321, and Gly421 each coordinate ATP.

Belongs to the FGGY kinase family.

It catalyses the reaction glycerol + ATP = sn-glycerol 3-phosphate + ADP + H(+). It participates in polyol metabolism; glycerol degradation via glycerol kinase pathway; sn-glycerol 3-phosphate from glycerol: step 1/1. In terms of biological role, key enzyme in the regulation of glycerol uptake and metabolism. Catalyzes the phosphorylation of glycerol to yield sn-glycerol 3-phosphate. This is Glycerol kinase from Haloquadratum walsbyi (strain DSM 16790 / HBSQ001).